A 373-amino-acid polypeptide reads, in one-letter code: P2Y purinoceptor 1 (373 aa).

The Extracellular portion of the chain corresponds to 1–51 (MTEVPWSAVPNGTDAAFLAGLGSLWGNSTIASTAAVSSSFRCALIKTGFQF). 2 N-linked (GlcNAc...) asparagine glycosylation sites follow: asparagine 11 and asparagine 27. Disulfide bonds link cysteine 42-cysteine 296 and cysteine 124-cysteine 202. Lysine 46 is a binding site for ADP. A helical transmembrane segment spans residues 52–74 (YYLPAVYILVFIIGFLGNSVAIW). Residues 75–87 (MFVFHMKPWSGIS) lie on the Cytoplasmic side of the membrane. The chain crosses the membrane as a helical span at residues 88 to 109 (VYMFNLALADFLYVLTLPALIF). Residues 110-125 (YYFNKTDWIFGDVMCK) lie on the Extracellular side of the membrane. Asparagine 113 carries an N-linked (GlcNAc...) asparagine glycan. A helical membrane pass occupies residues 126 to 147 (LQRFIFHVNLYGSILFLTCISA). Residues 148 to 166 (HRYSGVVYPLKSLGRLKKK) lie on the Cytoplasmic side of the membrane. A helical membrane pass occupies residues 167–188 (NAIYVSVLVWLIVVVAISPILF). Residues 189 to 214 (YSGTGIRKNKTVTCYDSTSDEYLRSY) are Extracellular-facing. Residue asparagine 197 is glycosylated (N-linked (GlcNAc...) asparagine). An ADP-binding site is contributed by 203–205 (YDS). The chain crosses the membrane as a helical span at residues 215–237 (FIYSMCTTVAMFCIPLVLILGCY). The Cytoplasmic segment spans residues 238–260 (GLIVRALIYKDLDNSPLRRKSIY). A helical membrane pass occupies residues 261–284 (LVIIVLTVFAVSYIPFHVMKTMNL). Residues 283–287 (NLRAR), 303–306 (YATY), and arginine 310 contribute to the ADP site. Topologically, residues 285–303 (RARLDFQTPEMCDFNDRVY) are extracellular. The helical transmembrane segment at 304-325 (ATYQVTRGLASLNSCVDPILYF) threads the bilayer. Residues 326–373 (LAGDTFRRRLSRATRKASRRSEANLQSKSEEMTLNILSEFKQNGDTSL) lie on the Cytoplasmic side of the membrane.

This sequence belongs to the G-protein coupled receptor 1 family. As to expression, expressed in muscle, heart, liver, kidney, lung, brain, spleen, but not in testis.

It localises to the cell membrane. In terms of biological role, receptor for extracellular adenine nucleotides such as ADP. In platelets, binding to ADP leads to mobilization of intracellular calcium ions via activation of phospholipase C, a change in platelet shape, and ultimately platelet aggregation. This is P2Y purinoceptor 1 (P2ry1) from Rattus norvegicus (Rat).